A 1224-amino-acid chain; its full sequence is Probable serine/threonine-protein kinase DDB_G0292350 (1224 aa).

Disordered regions lie at residues 57–98 (MSGS…STQR) and 252–284 (SSPSSSSSSIKTKNTTSTTTTTTTTKNLNDISN). Composition is skewed to low complexity over residues 58-74 (SGSIQSDLSSSDNFTSS) and 83-95 (SSSNTSNRNSDNS). 2 coiled-coil regions span residues 352-381 (LFKQQEKQHQQQQQQQQNQQDKEKFEKQNN) and 540-569 (DVQLSTKLNDEEETIEKEEEDLNSVDEYLT). 2 disordered regions span residues 693–784 (QPIP…FVIT) and 815–836 (FTNNNNNNNGGSTITTTTTNNI). Low complexity predominate over residues 743-768 (NNNNNNNNNINNNNINNNNINNNKNG). Residues 772 to 784 (GETPSPSSSFVIT) are compositionally biased toward polar residues. A Protein kinase domain is found at 935 to 1193 (FRDKIKLGTG…PEMLLHHTFL (259 aa)). Residues 941–949 (LGTGAFGNV) and K964 each bind ATP. D1063 serves as the catalytic Proton acceptor.

This sequence belongs to the protein kinase superfamily. Ser/Thr protein kinase family. The cofactor is Mg(2+).

It catalyses the reaction L-seryl-[protein] + ATP = O-phospho-L-seryl-[protein] + ADP + H(+). It carries out the reaction L-threonyl-[protein] + ATP = O-phospho-L-threonyl-[protein] + ADP + H(+). This Dictyostelium discoideum (Social amoeba) protein is Probable serine/threonine-protein kinase DDB_G0292350.